The chain runs to 395 residues: Non-homologous end joining protein Ku (395 aa).

The Ku domain occupies 9–181 (ISFGLVSIPI…PPEDAAPDGD (173 aa)). Residues 252–395 (RAARTSRDDE…SASSRKRTSA (144 aa)) form a disordered region. 2 stretches are compositionally biased toward polar residues: residues 283–292 (SSKTSGQSSG) and 311–320 (GKTVTRSGDS). A compositionally biased stretch (basic residues) spans 351-361 (TARKTTAKKTT). The segment covering 362-371 (AKGTTGTTAA) has biased composition (low complexity).

Belongs to the prokaryotic Ku family. As to quaternary structure, homodimer. Interacts with LigD.

Functionally, with LigD forms a non-homologous end joining (NHEJ) DNA repair enzyme, which repairs dsDNA breaks with reduced fidelity. Binds linear dsDNA with 5'- and 3'- overhangs but not closed circular dsDNA nor ssDNA. Recruits and stimulates the ligase activity of LigD. This is Non-homologous end joining protein Ku from Streptomyces griseus subsp. griseus (strain JCM 4626 / CBS 651.72 / NBRC 13350 / KCC S-0626 / ISP 5235).